A 730-amino-acid chain; its full sequence is Elongation factor 2 (730 aa).

Residues 19–228 (TKIRNIGIVA…TGVSFKDVYD (210 aa)) form the tr-type G domain. GTP contacts are provided by residues 28-35 (AHIDHGKT), 94-98 (DTPGH), and 148-151 (NKVD). His-596 carries the diphthamide modification.

This sequence belongs to the TRAFAC class translation factor GTPase superfamily. Classic translation factor GTPase family. EF-G/EF-2 subfamily.

It is found in the cytoplasm. Its function is as follows. Catalyzes the GTP-dependent ribosomal translocation step during translation elongation. During this step, the ribosome changes from the pre-translocational (PRE) to the post-translocational (POST) state as the newly formed A-site-bound peptidyl-tRNA and P-site-bound deacylated tRNA move to the P and E sites, respectively. Catalyzes the coordinated movement of the two tRNA molecules, the mRNA and conformational changes in the ribosome. The protein is Elongation factor 2 of Methanosarcina barkeri (strain Fusaro / DSM 804).